The sequence spans 452 residues: Cell division protein FtsZ (452 aa).

Residues 24-28 (GAGSN), 111-113 (GTG), glutamate 142, arginine 146, and aspartate 190 each bind GTP. The tract at residues 432–452 (DQDNKESDIHDIPAFLRKKRD) is disordered. The segment covering 433 to 442 (QDNKESDIHD) has biased composition (basic and acidic residues).

Belongs to the FtsZ family. In terms of assembly, homodimer. Polymerizes to form a dynamic ring structure in a strictly GTP-dependent manner. Interacts directly with several other division proteins.

It localises to the cytoplasm. Essential cell division protein that forms a contractile ring structure (Z ring) at the future cell division site. The regulation of the ring assembly controls the timing and the location of cell division. One of the functions of the FtsZ ring is to recruit other cell division proteins to the septum to produce a new cell wall between the dividing cells. Binds GTP and shows GTPase activity. The sequence is that of Cell division protein FtsZ from Rickettsia conorii (strain ATCC VR-613 / Malish 7).